The primary structure comprises 546 residues: Carboxylic ester hydrolase FVEG_12634 (546 aa).

The interval 72–91 (FTDGTKICPQPPSSNTPDPS) is disordered. Catalysis depends on S214, which acts as the Acyl-ester intermediate.

It belongs to the type-B carboxylesterase/lipase family.

It carries out the reaction a carboxylic ester + H2O = an alcohol + a carboxylate + H(+). Carboxylic ester hydrolase; part of the Fusarium detoxification of benzoxazolinone cluster 2 (FDB2) involved in the degradation of benzoxazolinones produced by the host plant. Maize, wheat, and rye produce the 2 benzoxazinone phytoanticipins 2,4-dihy-droxy-7-methoxy-1,4-benzoxazin-3-one (DIMBOA) and 2,4-dihydroxy-1,4-benzoxazin-3-one (DIBOA) that, due to their inherent instability once released, spontaneously degrade to the more stable corresponding benzoxazolinones, 6-methoxy-2-benzoxazolinone (MBOA) and 2-benzoxazolinone (BOA), respectively. The first step in the detoxification of benzoxazolinones involves the hydrolysis of the cyclic ester bond of benzoxazolinones by the FDB1 cluster gamma-lactamase MBL1 to aminophenols. MBL1 is able to convert BOA into 2-aminophenol (2-AP), as well as MBOA into 5-methoxy-2-aminophenol (2-AMP). The FDB2 cluster N-malonyltransferase FDB2/NAT1 then metabolizes aminophenols via N-malonylation to non-toxic malonamic acids. FDB2/NAT1 converts 2-AP into N-(2-hydroxyphenyl) malonamic acid (HPMA) and 2-AMP into N-(2-hydroxy-4-methoxyphenyl) malonamic acid (HMPMA). The duplicated dienlactone hydrolases DLH1 and DLH2 may provide redundant function for hydrolyzing the lactone moiety in the BOA molecule. The roles of the amidases an other enzymes encoded by the 2 FDB clusters have not been identified so far. The protein is Carboxylic ester hydrolase FVEG_12634 of Gibberella moniliformis (strain M3125 / FGSC 7600) (Maize ear and stalk rot fungus).